Consider the following 311-residue polypeptide: CAAX prenyl protease 2 (311 aa).

A run of 3 helical transmembrane segments spans residues 14–34 (VATC…PTVI), 51–71 (FICA…ILPI), and 94–114 (VVYP…LKLF). Glu164 serves as the catalytic Proton donor/acceptor. The helical transmembrane segment at 173 to 193 (IPLLLCAGFRINTAIFLCPVL) threads the bilayer. Catalysis depends on His198, which acts as the Proton donor/acceptor. 3 helical membrane passes run 219–239 (IVGL…FLFI), 244–264 (LAAP…VLYA), and 268–288 (GLVS…LFPL).

This sequence belongs to the peptidase U48 family. In terms of tissue distribution, expressed in seeds, stems, leaves, flowers and siliques.

The protein resides in the endoplasmic reticulum membrane. It carries out the reaction Hydrolyzes the peptide bond -P2-(S-farnesyl or geranylgeranyl)C-P1'-P2'-P3'-COOH where P1' and P2' are amino acids with aliphatic sidechains and P3' is any C-terminal residue.. Inhibited in vitro by L-1-tosylamido-2-phenylethyl chloromethyl ketone (TPCK) and N-ethylmaleimide, but not by EDTA. In terms of biological role, protease involved in the processing of a variety of prenylated proteins containing the C-terminal CAAX motif, where C is a cysteine modified with an isoprenoid lipid, A is an aliphatic amino acid and X is any C-terminal amino acid. Proteolytically removes the C-terminal three residues of farnesylated and geranylated proteins, leaving the prenylated cysteine as the new C-terminus. The substrate specificity is only partially overlapping with that of FACE1. CAAX processing is likely required for subcellular targeting of prenylated proteins to the plasma membrane. This Arabidopsis thaliana (Mouse-ear cress) protein is CAAX prenyl protease 2 (FACE2).